The following is a 398-amino-acid chain: ATP-dependent RNA helicase eIF4A (398 aa).

The Q motif motif lies at 25 to 53; the sequence is DSFDSMELKPELLRGVYAYGFERPSAIQQ. Residues 56–226 form the Helicase ATP-binding domain; it reads ILPIVKGNDV…TKFMRDPVRI (171 aa). 69-76 lines the ATP pocket; that stretch reads AQSGTGKT. Residues 174-177 carry the DEAD box motif; it reads DEAD. Residues 237–398 enclose the Helicase C-terminal domain; it reads GIKQFYIAVE…EMPMNVADLI (162 aa).

It belongs to the DEAD box helicase family. eIF4A subfamily. As to quaternary structure, component of the eIF4F complex, which composition varies with external and internal environmental conditions. It is composed of at least eIF4A, eIF4E and eIF4G.

The protein resides in the cytoplasm. The enzyme catalyses ATP + H2O = ADP + phosphate + H(+). ATP-dependent RNA helicase which is a subunit of the eIF4F complex involved in cap recognition and is required for mRNA binding to ribosome. In the current model of translation initiation, eIF4A unwinds RNA secondary structures in the 5'-UTR of mRNAs which is necessary to allow efficient binding of the small ribosomal subunit, and subsequent scanning for the initiator codon. In Emericella nidulans (strain FGSC A4 / ATCC 38163 / CBS 112.46 / NRRL 194 / M139) (Aspergillus nidulans), this protein is ATP-dependent RNA helicase eIF4A (tif1).